The primary structure comprises 645 residues: MDRAKPFVWRLVAASVCLLTFCHLARADSLEEQRNRYAQIKQAWDNRQMDVVEQMMPGLKDYPLYPYLEYRKITDDLMNQPAIAVTQFVRANPTLPPARTLQSRFVNELARREDWRGLLAFSPEKPGTTEAQCNYYYAKWSTGQTEAAWQGAKDLWLTGKSQPNACDKLFSVWRASGKQDPLAYLERIRLAMKAGNTGLVTVLAGQMPAEYQTIASAIITLANDPNNVLIFARTTGATDFTRQMAEVAFASVARQDAENARLMIPSLVQAQKLNEEQTQALRDIVAWRLMGNDVTDAQAKWRDDAIMRSQSTSLIERRVRMALGMGDRRGLNTWLARLPMEAKEKDEWRYWQADLLLERGRDAEAKEILHALMQKRGFYPMVAAQRLGEEYTLKIDKAPANVNSALTQGPEMARVRELMYWNLDNTARSEWANLVKSRSKSEQAQLARYAFNQHWWDLSVQATIAGKLWDHLEERFPLAYNDLFTRYTRGKDISQSYAMAIARQESAWNPKVKSPVGASGLMQIMPGTATHTVKMFSIPDYRGPGQLLEPETNINIGTSYLQYVYQQFGNNRIFASAAYNAGPGRVRTWLGNSAGRIDAVAFVESIPFSETRGYVKNVLAYDAYYRHFMGQKEALMSDSEWQRRY.

An N-terminal signal peptide occupies residues 1 to 27 (MDRAKPFVWRLVAASVCLLTFCHLARA). An intrachain disulfide couples Cys-133 to Cys-166. Residues 492 to 582 (DISQSYAMAI…IFASAAYNAG (91 aa)) are slt-type domain. The active site involves Glu-505.

It belongs to the transglycosylase Slt family.

It localises to the periplasm. It carries out the reaction Exolytic cleavage of the (1-&gt;4)-beta-glycosidic linkage between N-acetylmuramic acid (MurNAc) and N-acetylglucosamine (GlcNAc) residues in peptidoglycan, from either the reducing or the non-reducing ends of the peptidoglycan chains, with concomitant formation of a 1,6-anhydrobond in the MurNAc residue.. Its function is as follows. Murein-degrading enzyme. Catalyzes the cleavage of the glycosidic bonds between N-acetylmuramic acid and N-acetylglucosamine residues in peptidoglycan. May play a role in recycling of muropeptides during cell elongation and/or cell division. This chain is Soluble lytic murein transglycosylase (slt), found in Salmonella typhimurium (strain LT2 / SGSC1412 / ATCC 700720).